A 131-amino-acid chain; its full sequence is Fimbrial assembly protein, serogroups C1 and C2 (131 aa).

The polypeptide is Fimbrial assembly protein, serogroups C1 and C2 (fimB) (Dichelobacter nodosus (Bacteroides nodosus)).